Here is a 537-residue protein sequence, read N- to C-terminus: ATP synthase subunit beta (537 aa).

Positions 1-61 (MAKAATSKKE…SSPQKGGKKG (61 aa)) are disordered. Over residues 7–18 (SKKEASKVEAKK) the composition is skewed to basic and acidic residues. The segment covering 44–55 (NSPSRTGSSSPQ) has biased composition (polar residues). 209-216 (GGAGVGKT) contributes to the ATP binding site.

The protein belongs to the ATPase alpha/beta chains family. As to quaternary structure, F-type ATPases have 2 components, CF(1) - the catalytic core - and CF(0) - the membrane proton channel. CF(1) has five subunits: alpha(3), beta(3), gamma(1), delta(1), epsilon(1). CF(0) has three main subunits: a(1), b(2) and c(9-12). The alpha and beta chains form an alternating ring which encloses part of the gamma chain. CF(1) is attached to CF(0) by a central stalk formed by the gamma and epsilon chains, while a peripheral stalk is formed by the delta and b chains.

It is found in the cell inner membrane. The catalysed reaction is ATP + H2O + 4 H(+)(in) = ADP + phosphate + 5 H(+)(out). Functionally, produces ATP from ADP in the presence of a proton gradient across the membrane. The catalytic sites are hosted primarily by the beta subunits. This Bartonella bacilliformis (strain ATCC 35685 / KC583 / Herrer 020/F12,63) protein is ATP synthase subunit beta.